The primary structure comprises 92 residues: Larval cuticle protein 9 (92 aa).

An N-terminal signal peptide occupies residues 1–16 (MKFVIVLACLLAVVFA). The 62-residue stretch at 31–92 (LLDFNYAYEL…TGYHPKVVEA (62 aa)) folds into the Chitin-binding type R&amp;R domain.

Functionally, component of the cuticle of the larva. This chain is Larval cuticle protein 9 (Lcp9), found in Drosophila melanogaster (Fruit fly).